The sequence spans 132 residues: Protein NrdI (132 aa).

The protein belongs to the NrdI family.

Functionally, probably involved in ribonucleotide reductase function. The sequence is that of Protein NrdI from Bartonella quintana (strain Toulouse) (Rochalimaea quintana).